A 328-amino-acid chain; its full sequence is Glucokinase (328 aa).

16 to 21 is an ATP binding site; sequence ADIGGT.

This sequence belongs to the bacterial glucokinase family.

The protein localises to the cytoplasm. The catalysed reaction is D-glucose + ATP = D-glucose 6-phosphate + ADP + H(+). This is Glucokinase from Neisseria gonorrhoeae (strain ATCC 700825 / FA 1090).